A 629-amino-acid polypeptide reads, in one-letter code: Plastin-1 (629 aa).

M1 carries the post-translational modification N-acetylmethionine. 2 consecutive EF-hand domains span residues 11-46 (EELE…ASLP) and 51-86 (KVRE…LKSK). Ca(2+)-binding residues include D24, D26, S28, Y30, E35, D64, N66, D68, K70, and E75. 2 actin-binding regions span residues 108–380 (TSTI…CLHK) and 381–625 (PNNN…GKGL). 4 consecutive Calponin-homology (CH) domains span residues 122–238 (EEEK…KVGL), 266–376 (LSPE…NTYP), 395–504 (SKEE…RRYT), and 516–625 (KVND…GKGL).

Monomer. Post-translationally, phosphorylated. In terms of tissue distribution, in small intestine, colon, and kidney; relatively lower levels of expression are detected in the lung and stomach.

Its subcellular location is the cytoplasm. It localises to the cell projection. It is found in the stereocilium. Functionally, actin-bundling protein. In the inner ear, it is required for stereocilia formation. Mediates liquid packing of actin filaments that is necessary for stereocilia to grow to their proper dimensions. This chain is Plastin-1 (PLS1), found in Homo sapiens (Human).